Reading from the N-terminus, the 157-residue chain is Beta-defensin 125 (157 aa).

An N-terminal signal peptide occupies residues 1 to 20 (MNLLMLTFIICGLLTQVTKG). Intrachain disulfides connect Cys27–Cys55, Cys35–Cys49, and Cys39–Cys56. A disordered region spans residues 109-157 (GETITPETNTPETTMPPSETTSSKTTMPPSETATSETMPPPSQTALTHN). Positions 110 to 140 (ETITPETNTPETTMPPSETTSSKTTMPPSET) are enriched in low complexity. Residues 141-157 (ATSETMPPPSQTALTHN) show a composition bias toward polar residues.

This sequence belongs to the beta-defensin family.

The protein localises to the secreted. Functionally, has antibacterial activity. The polypeptide is Beta-defensin 125 (DEFB125) (Pongo pygmaeus (Bornean orangutan)).